Reading from the N-terminus, the 509-residue chain is Probable triacylglyceride transporter ML0556 (509 aa).

13 consecutive transmembrane segments (helical) span residues 48 to 68 (RITW…PLLS), 78 to 98 (LLLQ…ALAG), 112 to 132 (IQGV…ADLW), 146 to 166 (AAQE…VWLF), 171 to 191 (YVFW…QVSL), 203 to 223 (VDVV…IGLY), 232 to 252 (VLPS…VAFA), 272 to 292 (PFLS…VTLV), 309 to 329 (AAGL…LGGW), 339 to 359 (MTFV…HWPV), 381 to 403 (LLVA…LRVV), 410 to 430 (IASA…VAAL), and 477 to 497 (IFMI…LISS).

This sequence belongs to the major facilitator superfamily.

The protein localises to the cell inner membrane. In terms of biological role, in association with lipoprotein LprG probably transports triacylglycerides (TAG) across the inner cell membrane into the periplasm; TAG probably regulates lipid metabolism and growth regulation. May be an efflux transporter and involved in maintaining correct cell wall permeability. Probably required with LprG for normal surface localization of lipoarabinomannan (LAM). The polypeptide is Probable triacylglyceride transporter ML0556 (Mycobacterium leprae (strain TN)).